The following is a 1237-amino-acid chain: Glutamate receptor ionotropic, NMDA 2C (1237 aa).

Residues 1-19 (MGGALGPALLLTSLLGAWA) form the signal peptide. Topologically, residues 20 to 554 (RLGAGQGEQA…SAFLEPYSPA (535 aa)) are extracellular. N-linked (GlcNAc...) asparagine glycosylation is found at N70 and N73. C82 and C317 are oxidised to a cystine. 2 N-linked (GlcNAc...) asparagine glycosylation sites follow: N337 and N438. Cystine bridges form between C426–C453 and C433–C454. L-glutamate-binding residues include S509, T511, and R516. N-linked (GlcNAc...) asparagine glycosylation is present at N539. Residues 555 to 575 (VWVMMFVMCLTVVAITVFMFE) traverse the membrane as a helical segment. At 576 to 601 (YFSPVSYNQNLTKGKKPGGPSFTIGK) the chain is on the cytoplasmic side. The pore-forming stretch occupies residues 601 to 620 (KSVWLLWALVFNNSVPIENP). An intramembrane region (discontinuously helical) is located at residues 602 to 611 (SVWLLWALVF). Residues 612 to 622 (NNSVPIENPRG) lie on the Cytoplasmic side of the membrane. The chain crosses the membrane as a helical span at residues 623 to 644 (TTSKIMVLVWAFFAVIFLASYT). Residues 645-813 (ANLAAFMIQE…EVMSSKLDID (169 aa)) lie on the Extracellular side of the membrane. N-linked (GlcNAc...) asparagine glycosylation occurs at N685. The L-glutamate site is built by S687, T688, and D729. Cysteines 743 and 798 form a disulfide. Residues 814-833 (NMAGVFYMLLVAMGLALLVF) traverse the membrane as a helical segment. Residues 834–1237 (AWEHLVYWKL…RRVSSLESEV (404 aa)) lie on the Cytoplasmic side of the membrane. Residues S875, S881, and S912 each carry the phosphoserine modification. Residues 907–925 (ADVSSSLDRATRTIENWGN) show a composition bias toward polar residues. The disordered stretch occupies residues 907–990 (ADVSSSLDRA…LPDVSRPSCR (84 aa)). A compositionally biased stretch (low complexity) spans 930 to 941 (PAPTASGPRSST). The span at 968–982 (PQPPARPATCGPPLP) shows a compositional bias: pro residues. The PDZ-binding motif lies at 1235–1237 (SEV).

It belongs to the glutamate-gated ion channel (TC 1.A.10.1) family. NR2C/GRIN2C subfamily. Heterotetramer. Forms heterotetrameric channels composed of two GluN1/zeta subunits (GRIN1), and two identical GluN2/epsilon subunits (GRIN2A, GRIN2B, GRIN2C or GRIN2D) or GluN3 subunits (GRIN3A or GRIN3B) (in vitro). In vivo, the subunit composition may depend on the expression levels of the different subunits. Interacts with PDZ domains of PATJ and DLG4. Interacts (via PDZ-binding motif) with SNX27 (via PDZ domain); the interaction is required for recycling to the plasma membrane when endocytosed and prevent degradation in lysosomes. As to expression, detected in cerebellum.

It localises to the cell membrane. It is found in the postsynaptic cell membrane. The enzyme catalyses Ca(2+)(in) = Ca(2+)(out). It catalyses the reaction Na(+)(in) = Na(+)(out). The catalysed reaction is K(+)(in) = K(+)(out). Functionally, component of N-methyl-D-aspartate (NMDA) receptors (NMDARs) that function as heterotetrameric, ligand-gated cation channels with high calcium permeability and voltage-dependent block by Mg(2+). Participates in synaptic plasticity for learning and memory formation by contributing to the slow phase of excitatory postsynaptic current and long-term synaptic potentiation. Channel activation requires binding of the neurotransmitter L-glutamate to the GluN2 subunit, glycine or D-serine binding to the GluN1 subunit, plus membrane depolarization to eliminate channel inhibition by Mg(2+). NMDARs mediate simultaneously the potasium efflux and the influx of calcium and sodium. Each GluN2 subunit confers differential attributes to channel properties, including activation, deactivation and desensitization kinetics, pH sensitivity, Ca2(+) permeability, and binding to allosteric modulators. This chain is Glutamate receptor ionotropic, NMDA 2C, found in Rattus norvegicus (Rat).